We begin with the raw amino-acid sequence, 185 residues long: Elongation factor P (185 aa).

The protein belongs to the elongation factor P family.

It localises to the cytoplasm. Its pathway is protein biosynthesis; polypeptide chain elongation. Its function is as follows. Involved in peptide bond synthesis. Stimulates efficient translation and peptide-bond synthesis on native or reconstituted 70S ribosomes in vitro. Probably functions indirectly by altering the affinity of the ribosome for aminoacyl-tRNA, thus increasing their reactivity as acceptors for peptidyl transferase. The protein is Elongation factor P of Burkholderia ambifaria (strain MC40-6).